We begin with the raw amino-acid sequence, 187 residues long: MKITGVEIRPGNIIEFEGGIWKVTKIQHTQPGKGGAYMQVEAKNLIDGRKLNNRFRSADTVEKVRLDTKDFQYLYAEGDDLVFMDKDTYEQITIGKDVVGEAHEFLQDGMDVVLELWEERPISVELPEQIEATIVEADAVVKGQTASSSYKPAILDNGVRVMVPPHITSGTRIVVNVYDREYVRRAD.

Belongs to the elongation factor P family.

The protein localises to the cytoplasm. Its pathway is protein biosynthesis; polypeptide chain elongation. Its function is as follows. Involved in peptide bond synthesis. Stimulates efficient translation and peptide-bond synthesis on native or reconstituted 70S ribosomes in vitro. Probably functions indirectly by altering the affinity of the ribosome for aminoacyl-tRNA, thus increasing their reactivity as acceptors for peptidyl transferase. This Sphingopyxis alaskensis (strain DSM 13593 / LMG 18877 / RB2256) (Sphingomonas alaskensis) protein is Elongation factor P.